We begin with the raw amino-acid sequence, 618 residues long: COMPASS component cclA (618 aa).

The segment at 1–91 (MSSIQPVGSS…KKAAVAPNSA (91 aa)) is disordered. Low complexity-rich tracts occupy residues 8 to 19 (GSSGPSSNINSP) and 37 to 49 (NARS…SNAS). Over residues 57–69 (SKRNKRDSRKKRE) the composition is skewed to basic residues. The B30.2/SPRY domain maps to 157–368 (IADPGFPHIK…QSNVFSTKHL (212 aa)). A disordered region spans residues 588–618 (TLSVGHEGSPNPATPSAPLENTVPTEDVEMS).

It belongs to the cclA family. In terms of assembly, component of the COMPASS complex.

Its subcellular location is the nucleus. The protein resides in the chromosome. It is found in the telomere. Its function is as follows. Component of the COMPASS (Set1C) complex that specifically mono-, di- and trimethylates histone H3 to form H3K4me1/2/3, which subsequently plays a role in telomere length maintenance and transcription elongation regulation. Controls the production of several secondary metabolites, including gliotoxin, but does not contribute to pathogenicity. This is COMPASS component cclA from Aspergillus fumigatus (strain ATCC MYA-4609 / CBS 101355 / FGSC A1100 / Af293) (Neosartorya fumigata).